A 707-amino-acid polypeptide reads, in one-letter code: Choline transporter-like protein 4 (707 aa).

The Cytoplasmic segment spans residues 1-32 (MGKKQKENEAYGNSAKYDPSFRGPIKNRGCTD). The chain crosses the membrane as a helical span at residues 33-53 (IICCVLFLVFILGYIVVGLVA). Residues 54–227 (WVYGDPRQVL…KIFEDFAQSW (174 aa)) are Extracellular-facing. N67, N185, N195, and N196 each carry an N-linked (GlcNAc...) asparagine glycan. The chain crosses the membrane as a helical span at residues 228 to 248 (YWILVALGVALVLSLLFILLL). The Cytoplasmic portion of the chain corresponds to 249-250 (RL). A helical membrane pass occupies residues 251-271 (VAAPLVLLLIVGVLAVLAYGI). Residues 272–307 (YHCWQQYRELRDQGVSITQLGFTANLSAYQNVKETW) are Extracellular-facing. N296 carries N-linked (GlcNAc...) asparagine glycosylation. A helical transmembrane segment spans residues 308–328 (LAALIILAVLEGVLLLMLIFL). Residues 329–356 (RQRIRIAIALLKEASRAVGQMMSTMFYP) are Cytoplasmic-facing. The helical transmembrane segment at 357-377 (LVTFVLLVICIGYWAVTALYL) threads the bilayer. The Extracellular segment spans residues 378–452 (ATSGQPQYVY…GILGLFWTVN (75 aa)). N-linked (GlcNAc...) asparagine glycosylation is found at N391, N403, and N413. The chain crosses the membrane as a helical span at residues 453–473 (WVLALGQCVLAGAFASFYWAF). The Cytoplasmic segment spans residues 474–498 (HKPRDIPTFPLSSAFIRTLRYHTGS). The chain crosses the membrane as a helical span at residues 499-519 (LAFGALILTLVQIARVILEYI). The Extracellular segment spans residues 520-557 (DHKLRGSQNPVARCIICCFKCCLWCLEKFIKFLNRNAY). A helical membrane pass occupies residues 558 to 578 (IMIAIYGKNFCVSAKNAFMLL). Over 579–594 (MRNVVRVVVLDKVTDL) the chain is Cytoplasmic. A helical membrane pass occupies residues 595 to 615 (LLFFGKLLVVGGVGVLSFFFF). Over 616-635 (SGRIKGLGKDFKNPDLNYYW) the chain is Extracellular. Residues 636–656 (LPIMTSIMGAYVIASGFFSVF) traverse the membrane as a helical segment. Over 657–707 (GMCVDTLFLCFLEDLERNDGSQERPYYMPKALLKILGKKNEVPTGGKNRKK) the chain is Cytoplasmic.

It belongs to the CTL (choline transporter-like) family. Post-translationally, N-glycosylated; N-glycosylation of Asn-67 and Asn-391 is required for a proper thiamine pyrophosphate uptake. In terms of tissue distribution, highly expressed in intestine, kidney and stomach. Also expressed in testis and lung.

It localises to the membrane. The protein localises to the apical cell membrane. It catalyses the reaction choline(out) + n H(+)(in) = choline(in) + n H(+)(out). The enzyme catalyses thiamine diphosphate(out) = thiamine diphosphate(in). In terms of biological role, choline transporter that plays a role in the choline-acetylcholine system and is required to the efferent innervation of hair cells in the olivocochlear bundle for the maintenance of physiological function of outer hair cells and the protection of hair cells from acoustic injury. Also described as a thiamine pyrophosphate transporter in colon, may mediate the absorption of microbiota-generated thiamine pyrophosphate and contribute to host thiamine (vitamin B1) homeostasis. The polypeptide is Choline transporter-like protein 4 (Rattus norvegicus (Rat)).